Reading from the N-terminus, the 81-residue chain is UPF0180 protein ABC2430 (81 aa).

Belongs to the UPF0180 family.

The sequence is that of UPF0180 protein ABC2430 from Shouchella clausii (strain KSM-K16) (Alkalihalobacillus clausii).